The sequence spans 712 residues: Lactoperoxidase (712 aa).

Positions 1–26 are cleaved as a signal peptide; sequence MRVLLHLPALLASLILLQAAASTTRA. A propeptide spanning residues 27 to 80 is cleaved from the precursor; the sequence is QTTRTSAISDTVSQAKVQVNKAFLDSRTRLKTAMSSETPTSRQLSEYLKHAKGR. N-linked (GlcNAc...) asparagine glycosylation is present at asparagine 106. A disulfide bridge links cysteine 132 with cysteine 145. Asparagine 212 carries an N-linked (GlcNAc...) asparagine glycan. Aspartate 225 is a binding site for heme b. Histidine 226 (proton acceptor) is an active-site residue. Aspartate 227 is a Ca(2+) binding site. 2 cysteine pairs are disulfide-bonded: cysteine 246/cysteine 256 and cysteine 250/cysteine 274. Residues threonine 301, phenylalanine 303, aspartate 305, and serine 307 each coordinate Ca(2+). At serine 315 the chain carries Phosphoserine. Residues asparagine 322 and asparagine 358 are each glycosylated (N-linked (GlcNAc...) asparagine). An intrachain disulfide couples cysteine 354 to cysteine 365. Heme b-binding residues include glutamate 375 and histidine 468. Tyrosine 482 is subject to 3'-nitrotyrosine. 2 cysteine pairs are disulfide-bonded: cysteine 573–cysteine 630 and cysteine 671–cysteine 696.

The protein belongs to the peroxidase family. XPO subfamily. Ca(2+) serves as cofactor. Heme b is required as a cofactor. As to expression, mammary gland, milk and salivary gland. Found in bronchial submucosal glands.

It is found in the secreted. The protein localises to the cytoplasm. It carries out the reaction 2 a phenolic donor + H2O2 = 2 a phenolic radical donor + 2 H2O. It catalyses the reaction thiocyanate + H2O2 + H(+) = hypothiocyanous acid + H2O. The enzyme catalyses iodide + H2O2 = hypoiodite + H2O. Heme-containing oxidoreductase which catalyzes the conversion of thiocyanate (SCN(-)) into antimicrobial agent hypothiocyanous acid (OSCN(-)) in the presence of hydrogen peroxide (H2O2). Also involved in the conversion of iodide (I(-)) into hypoiodite (IO(-)) in the presence of H2O2. Responsible for the inactivation of a wide range of micro-organisms and hence, important component of defense mechanism. Shows antibacterial properties against Pseudomonas aeruginosa. The lactoperoxidase-SCN(-)-H2O2 system shows antibacterial properties against Burkholderia cepacia and Haemophilus influenzae in vitro. Present in mammary and salivary gland secretions and may contribute to airway host defense against infection. May contribute to maintaining an appropriate H2O2 cellular level, therefore protecting cells from H2O2-caused injuries and inflammation. This is Lactoperoxidase from Homo sapiens (Human).